Reading from the N-terminus, the 662-residue chain is MINHITDNQFKLVSKYQPSGDQPQAIEQLVDNIEGGEKAQILMGATGTGKTYTMSQVISKVNKPTLVIAHNKTLAGQLYGEFKEFFPENAVEYFVSYYDYYQPEAYVPSSDTYIEKDSSVNDEIDKLRHSATSALLERNDVIVVASVSCIYGLGSPKEYADSVVSLRPGLEISRDKLLNDLVDIQFERNDIDFQRGRFRVRGDVVEIFPASRDEHAFRVEFFGDEIDRIREVEALTGQVLGEVDHLAIFPATHFVTNDDHMEVAIAKIQAELEEQLAVFEKEGKLLEAQRLKQRTEYDIEMLREMGYTNGVENYSRHMDGRSEGEPPYTLLDFFPDDFLIMIDESHMTIGQIKGMYNGDRSRKEMLVNYGFRLPSALDNRPLRREEFESHVHQIVYVSATPGDYENEQTETVIEQIIRPTGLLDPEVEVRPTMGQIDDLLGEINARVEKNERTFITTLTKKMAEDLTDYFKEMGIKVKYMHSDIKTLERTEIIRDLRLGVFDVLVGINLLREGIDVPEVSLVAILDADKEGFLRNERGLIQTIGRAARNSEGHVIMYADTVTQSMQRAIDETARRRKIQMAYNEEHGIVPQTIKKEIRDLIAVTKAVAKEEDKEVDINSLNKQERKELVKKLEKQMQEAVEVLDFELAAQIRDMMLEVKALD.

One can recognise a Helicase ATP-binding domain in the interval 31 to 188 (DNIEGGEKAQ…NDLVDIQFER (158 aa)). Residue 44–51 (GATGTGKT) coordinates ATP. The Beta-hairpin signature appears at 97 to 120 (YYDYYQPEAYVPSSDTYIEKDSSV). Residues 435 to 601 (QIDDLLGEIN…TIKKEIRDLI (167 aa)) enclose the Helicase C-terminal domain. A UVR domain is found at 626 to 661 (KELVKKLEKQMQEAVEVLDFELAAQIRDMMLEVKAL).

Belongs to the UvrB family. In terms of assembly, forms a heterotetramer with UvrA during the search for lesions. Interacts with UvrC in an incision complex.

Its subcellular location is the cytoplasm. In terms of biological role, the UvrABC repair system catalyzes the recognition and processing of DNA lesions. A damage recognition complex composed of 2 UvrA and 2 UvrB subunits scans DNA for abnormalities. Upon binding of the UvrA(2)B(2) complex to a putative damaged site, the DNA wraps around one UvrB monomer. DNA wrap is dependent on ATP binding by UvrB and probably causes local melting of the DNA helix, facilitating insertion of UvrB beta-hairpin between the DNA strands. Then UvrB probes one DNA strand for the presence of a lesion. If a lesion is found the UvrA subunits dissociate and the UvrB-DNA preincision complex is formed. This complex is subsequently bound by UvrC and the second UvrB is released. If no lesion is found, the DNA wraps around the other UvrB subunit that will check the other stand for damage. This is UvrABC system protein B from Streptococcus pneumoniae (strain ATCC 700669 / Spain 23F-1).